The following is a 682-amino-acid chain: Potassium-transporting ATPase ATP-binding subunit (682 aa).

Transmembrane regions (helical) follow at residues 34 to 54, 58 to 78, 219 to 239, and 254 to 274; these read PVMFVVWAGSVLTTLLTLAMV, IAGSALFTGIISLWLWFTVLF, IALTILLIALTIVFLLATATL, and VLVALLVCLIPTTIGGLLSAI. D307 acts as the 4-aspartylphosphate intermediate in catalysis. ATP contacts are provided by residues D344, E348, 377–384, and K395; that span reads FTAQSRMS. The Mg(2+) site is built by D518 and D522. The next 3 membrane-spanning stretches (helical) occupy residues 588–608, 616–636, and 662–682; these read FAIIPAAFAATYPQLNALNVM, AILSAVIFNALIIIFLIPLAL, and LVVPFIGIKVIDVLLTLLGLA.

This sequence belongs to the cation transport ATPase (P-type) (TC 3.A.3) family. Type IA subfamily. In terms of assembly, the system is composed of three essential subunits: KdpA, KdpB and KdpC.

The protein localises to the cell inner membrane. It carries out the reaction K(+)(out) + ATP + H2O = K(+)(in) + ADP + phosphate + H(+). Functionally, part of the high-affinity ATP-driven potassium transport (or Kdp) system, which catalyzes the hydrolysis of ATP coupled with the electrogenic transport of potassium into the cytoplasm. This subunit is responsible for energy coupling to the transport system and for the release of the potassium ions to the cytoplasm. The chain is Potassium-transporting ATPase ATP-binding subunit from Salmonella enteritidis PT4 (strain P125109).